Here is a 963-residue protein sequence, read N- to C-terminus: Integrator complex subunit 4 (963 aa).

Lys-26 is modified (N6-acetyllysine). HEAT repeat units lie at residues 66–105 (AESV…TAGF), 145–183 (QAIQ…LEKS), 190–228 (GLAA…RGLK), 229–263 (LHQT…SQLY), 277–313 (IRLV…EQVS), 369–405 (NLIE…AQSS), 406–444 (PSFA…NITL), and 446–484 (EDQL…GIHL). Lys-791 participates in a covalent cross-link: Glycyl lysine isopeptide (Lys-Gly) (interchain with G-Cter in SUMO1); alternate. Lys-791 is covalently cross-linked (Glycyl lysine isopeptide (Lys-Gly) (interchain with G-Cter in SUMO2); alternate).

This sequence belongs to the Integrator subunit 4 family. As to quaternary structure, component of the Integrator complex, composed of core subunits INTS1, INTS2, INTS3, INTS4, INTS5, INTS6, INTS7, INTS8, INTS9/RC74, INTS10, INTS11/CPSF3L, INTS12, INTS13, INTS14 and INTS15. The core complex associates with protein phosphatase 2A subunits PPP2CA and PPP2R1A, to form the Integrator-PP2A (INTAC) complex. INTS4 is part of the RNA endonuclease subcomplex, composed of INTS4, INTS9, INTS11 and inositol hexakisphosphate (InsP6). Interacts with BRAT1; interaction is required for the assembly of the RNA endonuclease subcomplex.

Its subcellular location is the nucleus. It localises to the cytoplasm. Functionally, component of the integrator complex, a multiprotein complex that terminates RNA polymerase II (Pol II) transcription in the promoter-proximal region of genes. The integrator complex provides a quality checkpoint during transcription elongation by driving premature transcription termination of transcripts that are unfavorably configured for transcriptional elongation: the complex terminates transcription by (1) catalyzing dephosphorylation of the C-terminal domain (CTD) of Pol II subunit POLR2A/RPB1 and SUPT5H/SPT5, (2) degrading the exiting nascent RNA transcript via endonuclease activity and (3) promoting the release of Pol II from bound DNA. The integrator complex is also involved in terminating the synthesis of non-coding Pol II transcripts, such as enhancer RNAs (eRNAs), small nuclear RNAs (snRNAs), telomerase RNAs and long non-coding RNAs (lncRNAs). Within the integrator complex, INTS4 acts as an scaffold that links INTS9 and INTS11. Mediates recruitment of cytoplasmic dynein to the nuclear envelope, probably as component of the integrator complex. The sequence is that of Integrator complex subunit 4 from Homo sapiens (Human).